A 369-amino-acid chain; its full sequence is Protein RecA (369 aa).

Residue 77–84 (GPESSGKT) participates in ATP binding.

Belongs to the RecA family.

It is found in the cytoplasm. In terms of biological role, can catalyze the hydrolysis of ATP in the presence of single-stranded DNA, the ATP-dependent uptake of single-stranded DNA by duplex DNA, and the ATP-dependent hybridization of homologous single-stranded DNAs. It interacts with LexA causing its activation and leading to its autocatalytic cleavage. The sequence is that of Protein RecA from Corynebacterium pseudotuberculosis (strain C231).